Reading from the N-terminus, the 29-residue chain is Cyclotide cter-N (29 aa).

A cross-link (cyclopeptide (Gly-Asn)) is located at residues 1-29 (GSAFCGETCVLGTCYTPDCSCTALVCLKN). 3 cysteine pairs are disulfide-bonded: cysteine 5-cysteine 19, cysteine 9-cysteine 21, and cysteine 14-cysteine 26.

In terms of processing, this is a cyclic peptide.

Its subcellular location is the secreted. Probably participates in a plant defense mechanism. This Clitoria ternatea (Butterfly pea) protein is Cyclotide cter-N.